The sequence spans 432 residues: Adenylosuccinate synthetase (432 aa).

Residues Gly13–Lys19 and Gly41–Thr43 each bind GTP. Asp14 serves as the catalytic Proton acceptor. Positions 14 and 41 each coordinate Mg(2+). Residues Asp14–Lys17, Asn39–His42, Thr130, Arg144, Gln225, Thr240, and Arg304 contribute to the IMP site. The active-site Proton donor is the His42. Ala300–Arg306 contacts substrate. GTP contacts are provided by residues Arg306, Lys332–Asp334, and Ser415–Gly417.

The protein belongs to the adenylosuccinate synthetase family. As to quaternary structure, homodimer. Mg(2+) is required as a cofactor.

The protein localises to the cytoplasm. The catalysed reaction is IMP + L-aspartate + GTP = N(6)-(1,2-dicarboxyethyl)-AMP + GDP + phosphate + 2 H(+). Its pathway is purine metabolism; AMP biosynthesis via de novo pathway; AMP from IMP: step 1/2. Functionally, plays an important role in the de novo pathway of purine nucleotide biosynthesis. Catalyzes the first committed step in the biosynthesis of AMP from IMP. In Pectobacterium carotovorum subsp. carotovorum (strain PC1), this protein is Adenylosuccinate synthetase.